The primary structure comprises 346 residues: Protein RecA (346 aa).

Residue 67–74 (GPESSGKT) participates in ATP binding.

The protein belongs to the RecA family.

It localises to the cytoplasm. In terms of biological role, can catalyze the hydrolysis of ATP in the presence of single-stranded DNA, the ATP-dependent uptake of single-stranded DNA by duplex DNA, and the ATP-dependent hybridization of homologous single-stranded DNAs. It interacts with LexA causing its activation and leading to its autocatalytic cleavage. The protein is Protein RecA of Mycobacteroides abscessus (strain ATCC 19977 / DSM 44196 / CCUG 20993 / CIP 104536 / JCM 13569 / NCTC 13031 / TMC 1543 / L948) (Mycobacterium abscessus).